Here is a 353-residue protein sequence, read N- to C-terminus: Probable cytochrome c oxidase subunit 2 (353 aa).

A signal peptide spans 1–42 (MTARELVCSQRVGQGLSRRLRPLVLAVTLGVLVVTLSGCSWS). Helical transmembrane passes span 63-83 (LWIG…GLIF) and 110-130 (LVLT…TVIV). Histidine 246, cysteine 287, cysteine 291, and histidine 295 together coordinate Cu cation.

This sequence belongs to the cytochrome c oxidase subunit 2 family. Cu cation serves as cofactor. The cofactor is heme.

Its subcellular location is the cell membrane. The enzyme catalyses 4 Fe(II)-[cytochrome c] + O2 + 8 H(+)(in) = 4 Fe(III)-[cytochrome c] + 2 H2O + 4 H(+)(out). Its function is as follows. Subunits I and II form the functional core of the enzyme complex. Electrons originating in cytochrome c are transferred via heme a and Cu(A) to the binuclear center formed by heme a3 and Cu(B). This is Probable cytochrome c oxidase subunit 2 (ctaC) from Mycobacterium leprae (strain TN).